The following is a 265-amino-acid chain: ATP synthase subunit a (265 aa).

Helical transmembrane passes span 26–46 (VHLD…FFFY), 88–108 (IGSL…IDLI), 132–152 (DISA…FYTI), 168–188 (PFNH…TLLA), 195–217 (FRLF…MYMA), and 231–251 (LIWA…FMML).

This sequence belongs to the ATPase A chain family. F-type ATPases have 2 components, CF(1) - the catalytic core - and CF(0) - the membrane proton channel. CF(1) has five subunits: alpha(3), beta(3), gamma(1), delta(1), epsilon(1). CF(0) has three main subunits: a(1), b(2) and c(9-12). The alpha and beta chains form an alternating ring which encloses part of the gamma chain. CF(1) is attached to CF(0) by a central stalk formed by the gamma and epsilon chains, while a peripheral stalk is formed by the delta and b chains.

The protein localises to the cell inner membrane. Its function is as follows. Key component of the proton channel; it plays a direct role in the translocation of protons across the membrane. The protein is ATP synthase subunit a of Histophilus somni (strain 129Pt) (Haemophilus somnus).